A 746-amino-acid polypeptide reads, in one-letter code: Polyphosphate kinase (746 aa).

The segment covering 1–17 (MRQPNTQAEAQHTQPSV) has biased composition (polar residues). The disordered stretch occupies residues 1-60 (MRQPNTQAEAQHTQPSVGSIAAHRPNTVAATVSGLEPDIDADLDAYEESEESQDGGARLP). The span at 37–53 (PDIDADLDAYEESEESQ) shows a compositional bias: acidic residues. Asparagine 102 is a binding site for ATP. Arginine 429 and arginine 459 together coordinate Mg(2+). The active-site Phosphohistidine intermediate is the histidine 489. Positions 522, 618, and 646 each coordinate ATP.

The protein belongs to the polyphosphate kinase 1 (PPK1) family. The cofactor is Mg(2+). An intermediate of this reaction is the autophosphorylated ppk in which a phosphate is covalently linked to a histidine residue through a N-P bond.

The catalysed reaction is [phosphate](n) + ATP = [phosphate](n+1) + ADP. Functionally, catalyzes the reversible transfer of the terminal phosphate of ATP to form a long-chain polyphosphate (polyP). The chain is Polyphosphate kinase from Streptomyces coelicolor (strain ATCC BAA-471 / A3(2) / M145).